A 465-amino-acid chain; its full sequence is Tetratricopeptide repeat protein 38 (465 aa).

TPR repeat units lie at residues 104-137 (REQLHVSAVEMFAKGNFPRACDLWEQILRDHPTD), 176-209 (SYVKGIYSFGLMETNFYDQAQKLAKEALSIEPTD), and 248-281 (CHNYWHWALYLIEKGDYEAALTIYDSHILPSLQA).

Belongs to the TTC38 family.

This chain is Tetratricopeptide repeat protein 38 (Ttc38), found in Mus musculus (Mouse).